The chain runs to 145 residues: MVGRNSAIAAGVCGALFIGYCIYFDRKRRSDPNFKNRLRERRKKQKLAKERAGLSKLPDLKDAEAVQKFFLEEIQLGEELLAQGEYEKGVDHLTNAIAVCGQPQQLLQVLQQTLPPPVFQMLLTKLPTISQRIVSAQSLAEDDVE.

Residues methionine 1–serine 6 are Mitochondrial intermembrane-facing. The helical transmembrane segment at alanine 7–phenylalanine 24 threads the bilayer. Residues aspartate 25–glutamate 145 are Cytoplasmic-facing. Residues lysine 35, lysine 56, lysine 61, and lysine 68 each participate in a glycyl lysine isopeptide (Lys-Gly) (interchain with G-Cter in ubiquitin) cross-link. A phosphoserine mark is found at serine 135 and serine 138.

It belongs to the Tom20 family. As to quaternary structure, forms part of the preprotein translocase complex of the outer mitochondrial membrane (TOM complex) which consists of at least 7 different proteins (TOMM5, TOMM6, TOMM7, TOMM20, TOMM22, TOMM40 and TOMM70). Interacts with TOM22. Interacts with APEX1. Interacts with TBC1D21. Upon mitochondrial depolarization, interacts with PINK1; the interaction is required for PINK1-TOM-TIM23 supercomplex formation which is critical for PINK1 stabilization at the outer mitochondrial membrane, kinase activation and downstream mitophagy. In terms of processing, ubiquitinated by PRKN during mitophagy, leading to its degradation and enhancement of mitophagy. Deubiquitinated by USP30.

It localises to the mitochondrion outer membrane. Its function is as follows. Central component of the receptor complex responsible for the recognition and translocation of cytosolically synthesized mitochondrial preproteins. Together with TOM22 functions as the transit peptide receptor at the surface of the mitochondrion outer membrane and facilitates the movement of preproteins into the TOM40 translocation pore. Required for the translocation across the mitochondrial outer membrane of cytochrome P450 monooxygenases. In Bos taurus (Bovine), this protein is Mitochondrial import receptor subunit TOM20 homolog (TOMM20).